A 129-amino-acid polypeptide reads, in one-letter code: Histone H2A (129 aa).

Belongs to the histone H2A family. The nucleosome is a histone octamer containing two molecules each of H2A, H2B, H3 and H4 assembled in one H3-H4 heterotetramer and two H2A-H2B heterodimers. The octamer wraps approximately 147 bp of DNA.

The protein localises to the nucleus. Its subcellular location is the chromosome. Functionally, core component of nucleosome. Nucleosomes wrap and compact DNA into chromatin, limiting DNA accessibility to the cellular machineries which require DNA as a template. Histones thereby play a central role in transcription regulation, DNA repair, DNA replication and chromosomal stability. DNA accessibility is regulated via a complex set of post-translational modifications of histones, also called histone code, and nucleosome remodeling. The sequence is that of Histone H2A (H2A-II) from Chlamydomonas reinhardtii (Chlamydomonas smithii).